Consider the following 153-residue polypeptide: MSEQNNTEMSFQIQRIYTKDISFEAPNAPQVFQKEWEPEVKLDLDTASSQLADDVYEVVLRVTVTATVGEDSAFLCEVQQAGIFSVGGIDGTQMAHCLGAYCPNILFPYARECITSLVARGTFPQLNLAPVNFDALFMNYLQQSEGAAQQQDA.

This sequence belongs to the SecB family. As to quaternary structure, homotetramer, a dimer of dimers. One homotetramer interacts with 1 SecA dimer.

The protein resides in the cytoplasm. Its function is as follows. One of the proteins required for the normal export of preproteins out of the cell cytoplasm. It is a molecular chaperone that binds to a subset of precursor proteins, maintaining them in a translocation-competent state. It also specifically binds to its receptor SecA. This Erwinia tasmaniensis (strain DSM 17950 / CFBP 7177 / CIP 109463 / NCPPB 4357 / Et1/99) protein is Protein-export protein SecB.